The following is a 596-amino-acid chain: MAPRILLCGDPLGRLNQLFKRVQSVSKSAGPFDALICVGQFFPDSPEILDEFLDYVEGRAQVPIPTYFTGDYGVVAPKILSTTSKKAENQGFKMDGLEVCHNLFWLRGSGKFSLHGLSVAYLSGRQSSESQFGKYSQDDVDALRALAEEPGGVDLFLTNEWPAGVTNRAAVSDIPVGISDSSCSDSTVSELVMEVKPRYHIAGSMGVFYAREPYLNAESTHVTRFIGLAQVGNKNKQKFLHALSPTPTSTMSPAELSAKPPKTTLWPYNLQDGAAESKKRPNDSDSDSQYWRYDVPKRQKSGSQGEKLCFKFVCSGSCPRGEDCHFQHNAEAREQCRRGVCLDLIIKGKCEKGPECSYKHEFQDESSIQRKPRSENANRSKECWFCLSSPSVESHLIVSVGESFYCALPKGSLVEDHILIIPIEHLPNTLVLSPEVESELSRYQNGLRNCYKSQGNDAVFFELVSKRVSHANLQVVPVPSSRARLLPNIFSLAAEKLGFKLVTKKFNDSTDGRKYLQKEYNAALGLFYVELPDGTVLSHTLEENEVFPAQFGREVLAGLLKIPDRADWRNCKISQEEEAKLAEDFKKQFQEFDPCQ.

2 disordered regions span residues Leu-243 to Thr-263 and Asp-272 to Trp-291. 2 consecutive C3H1-type zinc fingers follow at residues Ser-303 to Glu-331 and Gln-335 to Gln-363.

The protein is Zinc finger CCCH domain-containing protein 64 of Arabidopsis thaliana (Mouse-ear cress).